The chain runs to 152 residues: Nucleoside diphosphate kinase B (152 aa).

The tract at residues 1 to 66 (MANLERTFIA…DRPFFPGLVK (66 aa)) is interaction with AKAP13. ATP is bound by residues K12, F60, R88, T94, R105, and N115. H118 serves as the catalytic Pros-phosphohistidine intermediate.

Belongs to the NDK family. Hexamer of two different chains: An and B (A6, A5B, A4B2, A3B3, A2B4, AB5, B6). Interacts with CAPN8. Interacts with AKAP13. Interacts with ITGB1BP1 (via C-terminal domain region). Interacts with BCL2L10. It depends on Mg(2+) as a cofactor.

It is found in the cytoplasm. The protein resides in the cell projection. The protein localises to the lamellipodium. Its subcellular location is the ruffle. It localises to the nucleus. The catalysed reaction is a 2'-deoxyribonucleoside 5'-diphosphate + ATP = a 2'-deoxyribonucleoside 5'-triphosphate + ADP. It catalyses the reaction a ribonucleoside 5'-diphosphate + ATP = a ribonucleoside 5'-triphosphate + ADP. It carries out the reaction ATP + protein L-histidine = ADP + protein N-phospho-L-histidine.. Major role in the synthesis of nucleoside triphosphates other than ATP. The ATP gamma phosphate is transferred to the NDP beta phosphate via a ping-pong mechanism, using a phosphorylated active-site intermediate. Negatively regulates Rho activity by interacting with AKAP13/LBC. Acts as a transcriptional activator of the MYC gene; binds DNA non-specifically. Binds to both single-stranded guanine- and cytosine-rich strands within the nuclease hypersensitive element (NHE) III(1) region of the MYC gene promoter. Does not bind to duplex NHE III(1). Has G-quadruplex (G4) DNA-binding activity, which is independent of its nucleotide-binding and kinase activity. Binds both folded and unfolded G4 with similar low nanomolar affinities. Stabilizes folded G4s regardless of whether they are prefolded or not. Exhibits histidine protein kinase activity. This is Nucleoside diphosphate kinase B (NME2) from Pongo abelii (Sumatran orangutan).